The chain runs to 231 residues: Protein OPG061 (231 aa).

It belongs to the orthopoxvirus OPG058 family.

The protein localises to the host nucleus. It is found in the host nucleolus. The polypeptide is Protein OPG061 (OPG061) (Variola virus).